The chain runs to 862 residues: Cytosolic carboxypeptidase 2 (862 aa).

A Peptidase M14 domain is found at Y359–C629. 3 residues coordinate Zn(2+): H425, E428, and H521. E593 functions as the Proton donor/acceptor in the catalytic mechanism. Disordered regions lie at residues S669 to P692, N704 to Q728, and S750 to S836. A compositionally biased stretch (low complexity) spans S674 to D689. The span at N711–K721 shows a compositional bias: basic residues. Positions A813–L825 are enriched in polar residues.

It belongs to the peptidase M14 family. Interacts with RARRES1, KIF11 and MAPRE1. Requires Zn(2+) as cofactor. Widely expressed. Expressed in tissues with motile cilia such as testis, lung and trachea. Also detected in brain, eye, muscle, pancreas, intestine, stomach, pituitary, spleen, adrenal and kidney. Expressed in mitral and granular cells in brain.

It localises to the cytoplasm. The protein localises to the cytosol. The protein resides in the cytoskeleton. It is found in the microtubule organizing center. Its subcellular location is the centrosome. It localises to the centriole. The protein localises to the cilium basal body. The enzyme catalyses (L-glutamyl)(n+1)-gamma-L-glutamyl-L-glutamyl-[protein] + H2O = (L-glutamyl)(n)-gamma-L-glutamyl-L-glutamyl-[protein] + L-glutamate. Its activity is regulated as follows. Inhibited by RARRES1. Metallocarboxypeptidase that mediates deglutamylation of tubulin and non-tubulin target proteins. Catalyzes the removal of polyglutamate side chains present on the gamma-carboxyl group of glutamate residues within the C-terminal tail of tubulin protein. Specifically cleaves tubulin long-side-chains, while it is not able to remove the branching point glutamate. Also catalyzes the removal of polyglutamate residues from the carboxy-terminus of non-tubulin proteins such as MYLK. This chain is Cytosolic carboxypeptidase 2, found in Mus musculus (Mouse).